We begin with the raw amino-acid sequence, 182 residues long: Isopentenyl-diphosphate Delta-isomerase (182 aa).

2 residues coordinate Mn(2+): H25 and H32. The region spanning 30–164 (LLHLAFSSWL…PWAFSPWMVM (135 aa)) is the Nudix hydrolase domain. C67 is an active-site residue. Residue H69 participates in Mn(2+) binding. E87 is a Mg(2+) binding site. The Mn(2+) site is built by E114 and E116. The active site involves E116.

It belongs to the IPP isomerase type 1 family. In terms of assembly, homodimer. The cofactor is Mg(2+). Mn(2+) serves as cofactor.

It localises to the cytoplasm. It carries out the reaction isopentenyl diphosphate = dimethylallyl diphosphate. Its pathway is isoprenoid biosynthesis; dimethylallyl diphosphate biosynthesis; dimethylallyl diphosphate from isopentenyl diphosphate: step 1/1. In terms of biological role, catalyzes the 1,3-allylic rearrangement of the homoallylic substrate isopentenyl (IPP) to its highly electrophilic allylic isomer, dimethylallyl diphosphate (DMAPP). The sequence is that of Isopentenyl-diphosphate Delta-isomerase from Escherichia coli (strain ATCC 8739 / DSM 1576 / NBRC 3972 / NCIMB 8545 / WDCM 00012 / Crooks).